Consider the following 532-residue polypeptide: Flavin-containing monooxygenase 1 (532 aa).

Position 2 is an N-acetylalanine (A2). The Lumenal portion of the chain corresponds to A2–P510. Residues G9–S13, E32, L40–W41, and N61–S62 contribute to the FAD site. Residues S60–N61 and S195–D198 contribute to the NADP(+) site. The chain crosses the membrane as a helical span at residues F511–F531. Position 532 (L532) is a topological domain, cytoplasmic.

Belongs to the FMO family. The cofactor is FAD. As to expression, expressed mainly in fetal and adult liver.

Its subcellular location is the endoplasmic reticulum membrane. It catalyses the reaction hypotaurine + NADPH + O2 + H(+) = taurine + NADP(+) + H2O. The catalysed reaction is hypotaurine + NADH + O2 + H(+) = taurine + NAD(+) + H2O. The enzyme catalyses trimethylamine + NADPH + O2 = trimethylamine N-oxide + NADP(+) + H2O. It carries out the reaction N,N-dimethylaniline + NADPH + O2 + H(+) = N,N-dimethylaniline N-oxide + NADP(+) + H2O. Broad spectrum monooxygenase that catalyzes the oxygenation of a wide variety of nitrogen- and sulfur-containing compounds including xenobiotics. Catalyzes the S-oxygenation of hypotaurine to produce taurine, an organic osmolyte involved in cell volume regulation as well as a variety of cytoprotective and developmental processes. In vitro, catalyzes the N-oxygenation of trimethylamine (TMA) to produce trimethylamine N-oxide (TMAO) and could therefore participate to the detoxification of this compound that is generated by the action of gut microbiota from dietary precursors such as choline, choline containing compounds, betaine or L-carnitine. The sequence is that of Flavin-containing monooxygenase 1 from Homo sapiens (Human).